Here is a 69-residue protein sequence, read N- to C-terminus: FMRFamide-like neuropeptides 24 (69 aa).

An N-terminal signal peptide occupies residues 1–25 (MLSSRTSSIILILAILVAIMAVAQC). A propeptide spanning residues 26–51 (RNIQYDVEEMTPEAAFRYAQWGEIPH) is cleaved from the precursor. At F64 the chain carries Phenylalanine amide. Positions 68–69 (SI) are excised as a propeptide.

Belongs to the FARP (FMRFamide related peptide) family.

Its subcellular location is the secreted. Probable FMRFamide-like neuropeptides. Plays a role in behaviors associated with a sleep-like state induced by stress (SIS), acting in concert with the FMRFamide related peptide flp-13 and neuropeptide-like protein nlp-8. The sequence is that of FMRFamide-like neuropeptides 24 from Caenorhabditis elegans.